The primary structure comprises 356 residues: GDP-mannose 4,6 dehydratase (356 aa).

Residues 12–17 (GITGQD), 69–70 (DL), 91–95 (LGAQS), and tyrosine 106 contribute to the NADP(+) site. The active site involves threonine 138. Residues glutamate 140 and tyrosine 162 each act as nucleophile in the active site. Residues lysine 166, histidine 192, and arginine 197 each coordinate NADP(+).

This sequence belongs to the NAD(P)-dependent epimerase/dehydratase family. GDP-mannose 4,6-dehydratase subfamily. Requires NADP(+) as cofactor.

The enzyme catalyses GDP-alpha-D-mannose = GDP-4-dehydro-alpha-D-rhamnose + H2O. Its pathway is nucleotide-sugar biosynthesis; GDP-L-fucose biosynthesis via de novo pathway; GDP-L-fucose from GDP-alpha-D-mannose: step 1/2. Participates in the synthesis of GDP-L-fucose, catalyzing the conversion of GDP-D-mannose to GDP-4-dehydro-6-deoxy-D-mannose (GDP-4-dehydro-alpha-D-rhamnose) which is further catalyzed by GDP-L-fucose synthase (ger). GDP-L-fucose is important for the synthesis of fucosylated N-glycans which are expressed on the cell surface. This Dictyostelium discoideum (Social amoeba) protein is GDP-mannose 4,6 dehydratase (gmd).